The chain runs to 600 residues: CTP synthase (600 aa).

The 267-residue stretch at 304 to 570 folds into the Glutamine amidotransferase type-1 domain; sequence TIVLVGKYTH…IQSGEEVEWS (267 aa). Catalysis depends on for GATase activity residues cysteine 403, histidine 532, and glutamate 534.

It belongs to the CTP synthase family.

The catalysed reaction is UTP + L-glutamine + ATP + H2O = CTP + L-glutamate + ADP + phosphate + 2 H(+). Its pathway is pyrimidine metabolism; CTP biosynthesis via de novo pathway; CTP from UDP: step 2/2. Its function is as follows. Catalyzes the ATP-dependent amination of UTP to CTP with either L-glutamine or ammonia as the source of nitrogen. This Schizosaccharomyces pombe (strain 972 / ATCC 24843) (Fission yeast) protein is CTP synthase (ura7).